A 442-amino-acid polypeptide reads, in one-letter code: 5-methylthioadenosine/S-adenosylhomocysteine deaminase (442 aa).

H70 and H72 together coordinate Zn(2+). Residues E99 and H191 each contribute to the substrate site. H218 lines the Zn(2+) pocket. Residues E221 and D306 each contribute to the substrate site. Residue D306 coordinates Zn(2+).

Belongs to the metallo-dependent hydrolases superfamily. MTA/SAH deaminase family. Requires Zn(2+) as cofactor.

The enzyme catalyses S-adenosyl-L-homocysteine + H2O + H(+) = S-inosyl-L-homocysteine + NH4(+). It carries out the reaction S-methyl-5'-thioadenosine + H2O + H(+) = S-methyl-5'-thioinosine + NH4(+). In terms of biological role, catalyzes the deamination of 5-methylthioadenosine and S-adenosyl-L-homocysteine into 5-methylthioinosine and S-inosyl-L-homocysteine, respectively. Is also able to deaminate adenosine. In Nitratidesulfovibrio vulgaris (strain DP4) (Desulfovibrio vulgaris), this protein is 5-methylthioadenosine/S-adenosylhomocysteine deaminase.